Consider the following 217-residue polypeptide: Elongation factor Ts (217 aa).

The involved in Mg(2+) ion dislocation from EF-Tu stretch occupies residues 80–83 (TDFV).

Belongs to the EF-Ts family.

The protein resides in the cytoplasm. Functionally, associates with the EF-Tu.GDP complex and induces the exchange of GDP to GTP. It remains bound to the aminoacyl-tRNA.EF-Tu.GTP complex up to the GTP hydrolysis stage on the ribosome. This Carboxydothermus hydrogenoformans (strain ATCC BAA-161 / DSM 6008 / Z-2901) protein is Elongation factor Ts.